We begin with the raw amino-acid sequence, 528 residues long: Abrin-a (528 aa).

Position 1 is a pyrrolidone carboxylic acid (Gln1). The active site involves Glu164. Disulfide bonds link Cys247–Cys269, Cys286–Cys305, and Cys329–Cys346. The Ricin B-type lectin 1 domain occupies 273-400 (YEPTVRIGGR…YLMRQGWRTG (128 aa)). A 1-alpha repeat occupies 283 to 325 (DGMCVDVYDNGYHNGNRIIMWKCKDRLEENQLWTLKSDKTIRS). One copy of the 1-beta repeat lies at 326–366 (NGKCLTTYGYAPGSYVMIYDCTSAVAEATYWEIWDNGTIIN). N-linked (GlcNAc...) asparagine glycans are attached at residues Asn361 and Asn401. The stretch at 369 to 401 (SALVLSAESSSMGGTLTVQTNEYLMRQGWRTGN) is one 1-gamma repeat. Positions 403 to 527 (TSPFVTSISG…GKPNQIWLTL (125 aa)) constitute a Ricin B-type lectin 2 domain. The stretch at 414–449 (SDLCMQAQGSNVWMADCDSNKKEQQWALYTDGSIRS) is one 2-alpha repeat. 2 disulfides stabilise this stretch: Cys417/Cys430 and Cys456/Cys473. Residues 453–492 (TNNCLTSKDHKQGSTILLMGCSNGWASQRWVFKNDGSIYS) form a 2-beta repeat. Residues 495–528 (DDMVMDVKGSDPSLKQIILWPYTGKPNQIWLTLF) form a 2-gamma repeat.

In the N-terminal section; belongs to the ribosome-inactivating protein family. Type 2 RIP subfamily. As to quaternary structure, disulfide-linked dimer of A and B chains.

The enzyme catalyses Endohydrolysis of the N-glycosidic bond at one specific adenosine on the 28S rRNA.. In terms of biological role, the A chain is responsible for inhibiting protein synthesis through the catalytic inactivation of 60S ribosomal subunits by removing adenine from position 4,324 of 28S rRNA. Abrin-a is more toxic than ricin. Functionally, the B chain is a galactose-specific lectin that facilitates the binding of abrin to the cell membrane that precedes endocytosis. The protein is Abrin-a of Abrus precatorius (Indian licorice).